The primary structure comprises 1444 residues: Bromodomain-containing protein 4 (1444 aa).

Disordered stretches follow at residues 1–44 (MGDG…PKRQ), 154–217 (VEIS…PQPI), 279–362 (AAPP…KQQE), 492–523 (PVMA…ERAQ), 540–645 (AALS…GGAA), 722–986 (CLRK…SSQP), and 1020–1422 (TSLM…RREA). A compositionally biased stretch (low complexity) spans 11-27 (SGSSSSQGQPSSQAPSS). A Bromo 1 domain is found at 43 to 149 (RQTNQLQYLL…KVFLTKISEM (107 aa)). A compositionally biased stretch (polar residues) spans 186–196 (ASPQTRGLSNL). Residues 206–216 (PQGPPTLPPQP) are compositionally biased toward pro residues. Residues 303–319 (TTTPTANDQLNESSPAE) show a composition bias toward polar residues. Basic and acidic residues predominate over residues 327-347 (PRRDNTRPSKLPKKEAPDSQH). The Bromo 2 domain maps to 358-467 (PKQQEQLRYC…DVFEMRFAKM (110 aa)). Residues 498–511 (SSSDTSSDSSSESE) are compositionally biased toward low complexity. An NPS region region spans residues 498-517 (SSSDTSSDSSSESESSTDDS). The interval 538 to 610 (QLAALSQPQA…SKKLSKKEGG (73 aa)) is BID region. A compositionally biased stretch (basic residues) spans 549-569 (KPKKKEKEKKEKKKDKHKKKA). The NET domain occupies 633–730 (DTEEDLGLTG…SCLRKKKKPA (98 aa)). Composition is skewed to low complexity over residues 746–760 (GTSS…SSSS), 800–823 (LQPQ…HPSP), 919–954 (LQQS…QQQH), and 1036–1046 (PSLLQSVQVQS). Polar residues predominate over residues 1090–1109 (PLQTAQTQPGQHKVSMPSTK). Low complexity predominate over residues 1110–1121 (AQQIIQQQQATQ). The C-terminal (CTD) region stretch occupies residues 1126–1444 (RQHKADSYNS…LMAIFEENLF (319 aa)). Positions 1151–1163 (QIPQYSLVHQSPS) are enriched in polar residues. The segment covering 1246-1255 (QDKEKFKQEP) has biased composition (basic and acidic residues). Positions 1282–1296 (SSTTPSSGLKSSSDS) are enriched in low complexity. Residues 1298–1357 (EQFRRAAREKEEREKALKAQVEQAEKDRLRKEQEKLRGRDEEDSIEPPRRPLEEPRRRQE) show a composition bias toward basic and acidic residues. Positions 1367–1389 (QHQTQAQAQTLNPAQSPSASQPT) are enriched in low complexity. Residues 1405–1422 (QQREMARRREQERRRREA) show a composition bias toward basic and acidic residues.

This sequence belongs to the BET family. As to expression, widely expressed.

It is found in the nucleus. The protein localises to the chromosome. Its function is as follows. Chromatin reader protein that recognizes and binds acetylated histones and plays a key role in transmission of epigenetic memory across cell divisions and transcription regulation. Remains associated with acetylated chromatin throughout the entire cell cycle and provides epigenetic memory for postmitotic G1 gene transcription by preserving acetylated chromatin status and maintaining high-order chromatin structure. During interphase, plays a key role in regulating the transcription of signal-inducible genes by associating with the P-TEFb complex and recruiting it to promoters. This chain is Bromodomain-containing protein 4 (brd4), found in Danio rerio (Zebrafish).